The primary structure comprises 121 residues: Large ribosomal subunit protein bL12 (121 aa).

Belongs to the bacterial ribosomal protein bL12 family. As to quaternary structure, homodimer. Part of the ribosomal stalk of the 50S ribosomal subunit. Forms a multimeric L10(L12)X complex, where L10 forms an elongated spine to which 2 to 4 L12 dimers bind in a sequential fashion. Binds GTP-bound translation factors.

Functionally, forms part of the ribosomal stalk which helps the ribosome interact with GTP-bound translation factors. Is thus essential for accurate translation. The polypeptide is Large ribosomal subunit protein bL12 (Lactococcus lactis subsp. lactis (strain IL1403) (Streptococcus lactis)).